Reading from the N-terminus, the 166-residue chain is Cofilin-1 (166 aa).

Ala-2 is modified (N-acetylalanine). 2 positions are modified to phosphoserine: Ser-3 and Ser-8. An ADF-H domain is found at Gly-4–Leu-153. Lys-13 is subject to N6-acetyllysine. Residue Thr-25 is modified to Phosphothreonine. The Nuclear localization signal motif lies at Lys-30–Lys-34. The residue at position 41 (Ser-41) is a Phosphoserine. A Phosphotyrosine modification is found at Tyr-68. Residue Lys-73 is modified to N6-acetyllysine. Lys-132 is covalently cross-linked (Glycyl lysine isopeptide (Lys-Gly) (interchain with G-Cter in SUMO2)). Residue Tyr-140 is modified to Phosphotyrosine. Lys-144 bears the N6-acetyllysine mark. At Ser-156 the chain carries Phosphoserine.

Belongs to the actin-binding proteins ADF family. Can bind G- and F-actin in a 1:1 ratio of cofilin to actin. It is a major component of intranuclear and cytoplasmic actin rods. Interacts with the subcortical maternal complex (SCMC) via interaction with TLE6 and NLRP5. Interacts with C9orf72. Inactivated by phosphorylation on Ser-3. Phosphorylated on Ser-3 in resting cells. Dephosphorylated by PDXP/chronophin; this restores its activity in promoting actin filament depolymerization. The phosphorylation of Ser-24 may prevent recognition of the nuclear localization signal. Phosphorylated via a ARRB1-RAC1-LIMK1-PAK1 cascade upon active ligand stimulation of atypical chemokine receptor ACKR2.

It localises to the nucleus matrix. The protein localises to the cytoplasm. Its subcellular location is the cytoskeleton. It is found in the cell projection. The protein resides in the ruffle membrane. It localises to the lamellipodium membrane. The protein localises to the lamellipodium. Its subcellular location is the growth cone. It is found in the axon. Its function is as follows. Binds to F-actin and exhibits pH-sensitive F-actin depolymerizing activity. Important for normal progress through mitosis and normal cytokinesis. In conjunction with the subcortical maternal complex (SCMC), plays an essential role for zygotes to progress beyond the first embryonic cell divisions via regulation of actin dynamics. Required for the centralization of the mitotic spindle and symmetric division of zygotes. Plays a role in the regulation of cell morphology and cytoskeletal organization in epithelial cells. Required for the up-regulation of atypical chemokine receptor ACKR2 from endosomal compartment to cell membrane, increasing its efficiency in chemokine uptake and degradation. Required for neural tube morphogenesis and neural crest cell migration. The sequence is that of Cofilin-1 (CFL1) from Bos taurus (Bovine).